A 437-amino-acid chain; its full sequence is CMP-5'-(3-aminopropyl)phosphonate hydroxylase (437 aa).

The cofactor is FAD.

It carries out the reaction CMP-5'-(3-aminopropyl)phosphonate + NADPH + O2 = CMP-5'-(N-hydroxy-3-aminopropyl)phosphonate + NADP(+) + H2O. Its pathway is antibiotic biosynthesis. Its function is as follows. Hydroxylase involved in the biosynthesis of the phosphonate antibiotic FR-900098, a potent antimalarial agent that acts as an inhibitor of 1-deoxy-D-xylulose 5-phosphate reductoisomerase (DXR), the first enzyme in the nonmevalonate pathway for isoprenoid biosynthesis. Catalyzes the N-hydroxylation of CMP-5'-3-aminopropylphosphonate (CMP-5'-3APn) to CMP-5'-(N-hydroxy-3-aminopropyl)phosphonate (CMP-5'-H3APn). Cannot use CMP-5'-N-acetyl-3-aminopropylphosphonate (CMP-5'-Ac3APn) as a substrate. The polypeptide is CMP-5'-(3-aminopropyl)phosphonate hydroxylase (Streptomyces rubellomurinus (strain ATCC 31215)).